The sequence spans 331 residues: UPF0324 membrane protein YdhF (331 aa).

Helical transmembrane passes span 2–20, 24–46, 82–104, 114–136, 148–170, 204–226, 247–269, and 308–330; these read SILPGFLLSFAIAIVSYLL, IFHSLGSATIAILLGIILGNLYF, LGFSGVGFILIQMISTIIFVLFM, VSALMASGNAVCGSSAIAAVEPV, IAMVNLMGTILMLSLPFLGTWMF, TLATLFKIMRIIMLVFVVLYFGF, SFLPWYVLGFLVLCTLDTLIHFV, and LIYGLSTLVFQVVLALILISLLI.

The protein belongs to the UPF0324 family.

It localises to the cell membrane. This Lactococcus lactis subsp. lactis (strain IL1403) (Streptococcus lactis) protein is UPF0324 membrane protein YdhF (ydhF).